A 492-amino-acid polypeptide reads, in one-letter code: MSFTLAIVGRPNVGKSTLFNRLVGKKLALVDDQPGVTRDLREGEARLGDLRFTVIDSAGLEDATDNSLEGRMRRLTERAVEMADVCLFLIDARAGVTPTDEVFAEILRKKSAHVILAANKSEGSAADAGVLEAYGLGLGEPIRMSGEHGEGLNDLYSELLPVSEKFEKLAEETAPETDVVLDEDENEAFNAGEEIAATPVPTLEKPLQVAVVGRPNAGKSTLINKILGEDRLLTGPEAGITRDAISLKIDWSGTPMRIFDTAGMRKKAKVQEKLEKLSVSDGLRAVKFAEVVVVLLDAAIPFEQQDLRIADLAEREGRAVVIAVNKWDIEDEKQEKLKALKEAFERLLPQLRGAPLVTVSAKTGRGLDRLHAAIMKAHDVWNRRVPTAALNRWLAGMLEQHPPPAPQGKRIKLRYMTQAKTRPPGFVVMCSHPDKMPASYNRYLVNGLREDFDMPGTPIRLTLRGQGDKNPYKGKKKSTPSRLRKHLEGRKS.

EngA-type G domains follow at residues 3–167 and 207–382; these read FTLA…EKFE and LQVA…DVWN. GTP-binding positions include 9–16, 56–60, 119–122, 213–220, 260–264, and 325–328; these read GRPNVGKS, DSAGL, NKSE, GRPNAGKS, DTAGM, and NKWD. Positions 383-469 constitute a KH-like domain; the sequence is RRVPTAALNR…RLTLRGQGDK (87 aa). The disordered stretch occupies residues 461 to 492; sequence LTLRGQGDKNPYKGKKKSTPSRLRKHLEGRKS. The span at 472 to 492 shows a compositional bias: basic residues; sequence YKGKKKSTPSRLRKHLEGRKS.

Belongs to the TRAFAC class TrmE-Era-EngA-EngB-Septin-like GTPase superfamily. EngA (Der) GTPase family. Associates with the 50S ribosomal subunit.

Functionally, GTPase that plays an essential role in the late steps of ribosome biogenesis. The polypeptide is GTPase Der (Ruegeria sp. (strain TM1040) (Silicibacter sp.)).